A 249-amino-acid chain; its full sequence is uncharacterized protein (249 aa).

Residues His10, His12, Glu95, His129, His150, and Asp198 each contribute to the a divalent metal cation site.

The protein belongs to the metallo-dependent hydrolases superfamily. TatD-type hydrolase family. A divalent metal cation serves as cofactor.

This is an uncharacterized protein from Methanocaldococcus jannaschii (strain ATCC 43067 / DSM 2661 / JAL-1 / JCM 10045 / NBRC 100440) (Methanococcus jannaschii).